Reading from the N-terminus, the 431-residue chain is Histidine--tRNA ligase (431 aa).

Belongs to the class-II aminoacyl-tRNA synthetase family.

Its subcellular location is the cytoplasm. The enzyme catalyses tRNA(His) + L-histidine + ATP = L-histidyl-tRNA(His) + AMP + diphosphate + H(+). This Pyrococcus horikoshii (strain ATCC 700860 / DSM 12428 / JCM 9974 / NBRC 100139 / OT-3) protein is Histidine--tRNA ligase (hisS).